A 1063-amino-acid polypeptide reads, in one-letter code: Integrin alpha-8 (1063 aa).

The first 38 residues, 1 to 38 (MSPGASRGPRGSQAPLIAPLCCAAAALGMLLWSPACQA), serve as a signal peptide directing secretion. At 39 to 1012 (FNLDVEKLTV…TPNVSFSIPL (974 aa)) the chain is on the extracellular side. 7 FG-GAP repeats span residues 44–105 (EKLT…GSAQ), 122–183 (NGTK…AYAE), 188–240 (RNSN…IANY), 253–306 (KQTE…STDM), 307–372 (TFIQ…LLFR), 373–431 (DPQI…GLNT), and 435–498 (QVLQ…LHPM). The N-linked (GlcNAc...) asparagine glycan is linked to N81. The cysteines at positions 96 and 106 are disulfide-linked. An N-linked (GlcNAc...) asparagine glycan is attached at N122. C150 and C171 are disulfide-bonded. N177 carries an N-linked (GlcNAc...) asparagine glycan. An intrachain disulfide couples C187 to C200. A glycan (N-linked (GlcNAc...) asparagine) is linked at N239. Ca(2+) contacts are provided by E275, T277, D279, and E283. N-linked (GlcNAc...) asparagine glycans are attached at residues N302 and N311. Positions 329, 331, 333, 335, 337, 395, 397, 399, 401, and 403 each coordinate Ca(2+). A Cell attachment site motif is present at residues 455–457 (RGD). Ca(2+) contacts are provided by D459, D461, N463, Y465, and D467. N504 carries N-linked (GlcNAc...) asparagine glycosylation. Disulfide bonds link C507–C518 and C524–C580. 2 N-linked (GlcNAc...) asparagine glycosylation sites follow: N601 and N605. 2 cysteine pairs are disulfide-bonded: C641-C647 and C713-C726. Residues N719, N737, N753, N780, N896, and N923 are each glycosylated (N-linked (GlcNAc...) asparagine). Cystine bridges form between C867–C924 and C929–C934. N1005 carries an N-linked (GlcNAc...) asparagine glycan. The helical transmembrane segment at 1013-1033 (WVIILAILLGLLVLAILTLAL) threads the bilayer. The Cytoplasmic segment spans residues 1034 to 1063 (WKCGFFDRARPPQEDMTDREQLTNDKTPEA).

It belongs to the integrin alpha chain family. As to quaternary structure, heterodimer of an alpha and a beta subunit. The alpha subunit is composed of a heavy and a light chain linked by a disulfide bond. Alpha-8 associates with beta-1. In terms of tissue distribution, expressed in mesenchymal cells, including alveolar myofibroblasts, kidney mesangial cells and hepatic stellar cells and vascular and visceral smooth muscle (at protein level).

It is found in the membrane. Its subcellular location is the cell membrane. In terms of biological role, integrin alpha-8/beta-1 functions in the genesis of kidney and probably of other organs by regulating the recruitment of mesenchymal cells into epithelial structures. It recognizes the sequence R-G-D in a wide array of ligands including TNC, FN1, SPP1 TGFB1, TGFB3 and VTN. NPNT is probably its functional ligand in kidney genesis. Neuronal receptor for TNC it mediates cell-cell interactions and regulates neurite outgrowth of sensory and motor neurons. The chain is Integrin alpha-8 (ITGA8) from Homo sapiens (Human).